The sequence spans 350 residues: Membrane progestin receptor alpha (350 aa).

At 1-80 the chain is on the cytoplasmic side; it reads MATMVAQKLS…HNEAVNVWTH (80 aa). A helical membrane pass occupies residues 81–101; that stretch reads LLAALVLLLRLAIFVGTVDFW. Over 102–105 the chain is Extracellular; that stretch reads GDPH. A helical transmembrane segment spans residues 106–126; that stretch reads ALPLFIIVLASFTYLSLSALA. Topologically, residues 127–139 are cytoplasmic; it reads HLLQAKSEFWHYS. The helical transmembrane segment at 140–160 threads the bilayer; sequence FFFLDYVGVAVYQFGSALAHF. The Extracellular portion of the chain corresponds to 161-165; that stretch reads YYAIE. The chain crosses the membrane as a helical span at residues 166–186; it reads PAWHAQVQTIFLPMAAFLAWL. At 187–239 the chain is on the cytoplasmic side; sequence SCTGSCYNKYIQKPGLLGRTCQEVPSALAYALDISPVAHRILASPEPATDDPA. The helical transmembrane segment at 240 to 260 threads the bilayer; it reads LLYHKCQVVFFLLAAAFFSAF. Residues 261–278 are Extracellular-facing; sequence MPERWFPGSCHIFGQGHQ. A helical membrane pass occupies residues 279 to 299; it reads LFHVFLVLCTLAQLEAVALDY. The Cytoplasmic segment spans residues 300 to 318; that stretch reads EARRPIYEPLHTRWPHNFS. A helical membrane pass occupies residues 319-339; it reads GLFLLTVGSSILTAFLLSQLV. Residues 340–350 lie on the Extracellular side of the membrane; it reads RRKLDLDRKTQ.

It belongs to the ADIPOR family.

The protein resides in the cell membrane. Its function is as follows. Plasma membrane progesterone (P4) receptor coupled to G proteins. Seems to act through a G(i) mediated pathway. May be involved in oocyte maturation. Involved in neurosteroid inhibition of apoptosis. Also binds dehydroepiandrosterone (DHEA), pregnanolone, pregnenolone and allopregnanolone. This is Membrane progestin receptor alpha (PAQR7) from Sus scrofa (Pig).